A 678-amino-acid polypeptide reads, in one-letter code: Glycine--tRNA ligase beta subunit (678 aa).

It belongs to the class-II aminoacyl-tRNA synthetase family. Tetramer of two alpha and two beta subunits.

It localises to the cytoplasm. The catalysed reaction is tRNA(Gly) + glycine + ATP = glycyl-tRNA(Gly) + AMP + diphosphate. This is Glycine--tRNA ligase beta subunit from Streptococcus pneumoniae (strain Hungary19A-6).